The primary structure comprises 371 residues: MQQKCYYEILNVSKTASGVEIKRAYRKLAMEYHPDRNPGDKEAEIKFKEISEAYEILSDDSKRSRYDQFGHAGVNQQSGFGGTGGFEDIFDTFFGGGTSRGSNRSRASRGSDLEYTLEITLEEAFFGVEKEITIPRMESCDSCDGTGSKSRSKTTCHACHGQGTIRRQQGFFAFEQTCPVCNGTGYSITDPCDACYGNGKVKKQKTLKVKIPEGVDNGDRIRLQGEGDSGSNGAMNGDLYVQIIIKEHKIFERRDINLYCEMPISFTKACIGGDIKVPTLDGEVVLKVVPETQTGKVFRLREKGMKSLRGHRRGDLLCKVVVETPVNLSAEQKELLEKFADSLGEDYQSKHAPKSKTWFDNVKDYAKKFFE.

In terms of domain architecture, J spans 5–70 (CYYEILNVSK…SKRSRYDQFG (66 aa)). The CR-type zinc finger occupies 127 to 204 (GVEKEITIPR…CYGNGKVKKQ (78 aa)). Cys140, Cys143, Cys156, Cys159, Cys178, Cys181, Cys192, and Cys195 together coordinate Zn(2+). 4 CXXCXGXG motif repeats span residues 140-147 (CDSCDGTG), 156-163 (CHACHGQG), 178-185 (CPVCNGTG), and 192-199 (CDACYGNG).

The protein belongs to the DnaJ family. As to quaternary structure, homodimer. The cofactor is Zn(2+).

The protein localises to the cytoplasm. Its function is as follows. Participates actively in the response to hyperosmotic and heat shock by preventing the aggregation of stress-denatured proteins and by disaggregating proteins, also in an autonomous, DnaK-independent fashion. Unfolded proteins bind initially to DnaJ; upon interaction with the DnaJ-bound protein, DnaK hydrolyzes its bound ATP, resulting in the formation of a stable complex. GrpE releases ADP from DnaK; ATP binding to DnaK triggers the release of the substrate protein, thus completing the reaction cycle. Several rounds of ATP-dependent interactions between DnaJ, DnaK and GrpE are required for fully efficient folding. Also involved, together with DnaK and GrpE, in the DNA replication of plasmids through activation of initiation proteins. The protein is Chaperone protein DnaJ of Francisella tularensis subsp. tularensis (strain WY96-3418).